The primary structure comprises 169 residues: Cell division inhibitor SulA (169 aa).

The ftsZ binding stretch occupies residues 106-112; sequence ALRTGNY. Positions 162 to 169 are lon protease binding; it reads KIHSNLYH.

Belongs to the SulA family. In terms of assembly, interacts with FtsZ. Post-translationally, is rapidly cleaved and degraded by the Lon protease once DNA damage is repaired.

Functionally, component of the SOS system and an inhibitor of cell division. Accumulation of SulA causes rapid cessation of cell division and the appearance of long, non-septate filaments. In the presence of GTP, binds a polymerization-competent form of FtsZ in a 1:1 ratio, thus inhibiting FtsZ polymerization and therefore preventing it from participating in the assembly of the Z ring. This mechanism prevents the premature segregation of damaged DNA to daughter cells during cell division. The chain is Cell division inhibitor SulA from Salmonella agona (strain SL483).